The following is an 86-amino-acid chain: Large ribosomal subunit protein bL28 (86 aa).

This sequence belongs to the bacterial ribosomal protein bL28 family.

This is Large ribosomal subunit protein bL28 from Bacteroides thetaiotaomicron (strain ATCC 29148 / DSM 2079 / JCM 5827 / CCUG 10774 / NCTC 10582 / VPI-5482 / E50).